A 520-amino-acid polypeptide reads, in one-letter code: Arginine biosynthesis bifunctional protein ArgJ, chloroplastic (520 aa).

Threonine 264, lysine 290, threonine 301, glutamate 388, asparagine 515, and threonine 520 together coordinate substrate. The active-site Nucleophile is the threonine 301.

This sequence belongs to the ArgJ family. As to quaternary structure, heterodimer of an alpha and a beta chain.

It localises to the plastid. Its subcellular location is the chloroplast. It catalyses the reaction N(2)-acetyl-L-ornithine + L-glutamate = N-acetyl-L-glutamate + L-ornithine. The catalysed reaction is L-glutamate + acetyl-CoA = N-acetyl-L-glutamate + CoA + H(+). Its pathway is amino-acid biosynthesis; L-arginine biosynthesis; L-ornithine and N-acetyl-L-glutamate from L-glutamate and N(2)-acetyl-L-ornithine (cyclic): step 1/1. The protein operates within amino-acid biosynthesis; L-arginine biosynthesis; N(2)-acetyl-L-ornithine from L-glutamate: step 1/4. In terms of biological role, catalyzes two activities which are involved in the cyclic version of arginine biosynthesis: the synthesis of acetylglutamate from glutamate and acetyl-CoA, and of ornithine by transacetylation between acetylornithine and glutamate. The chain is Arginine biosynthesis bifunctional protein ArgJ, chloroplastic from Physcomitrium patens (Spreading-leaved earth moss).